The chain runs to 572 residues: Glutathione hydrolase 5 proenzyme (572 aa).

The Cytoplasmic portion of the chain corresponds to 1–6; the sequence is MAWGHR. A helical; Signal-anchor for type II membrane protein transmembrane segment spans residues 7–29; that stretch reads TTVCLVLLGVSLGLAIIVLAVVL. Residues 30 to 572 lie on the Extracellular side of the membrane; it reads PHHQASCRPD…LRKAGKASGY (543 aa). An N-linked (GlcNAc...) asparagine glycan is attached at Asn-98. Arg-110 is a binding site for L-glutamate. 7 N-linked (GlcNAc...) asparagine glycosylation sites follow: Asn-185, Asn-194, Asn-204, Asn-277, Asn-303, Asn-347, and Asn-377. Residue Thr-388 is the Nucleophile of the active site. L-glutamate contacts are provided by residues Thr-406, Glu-427, and 453-454; that span reads SS.

Belongs to the gamma-glutamyltransferase family. In terms of assembly, heterodimer composed of the light and heavy chains. The active site is located in the light chain. Post-translationally, cleaved by autocatalysis into a large and a small subunit. In terms of processing, glycosylated. In terms of tissue distribution, widely expressed, but at low level, except in the airway epithelial cells. Detected in brain, heart, kidney, liver, lung, spleen, testis and trachea.

Its subcellular location is the membrane. It carries out the reaction glutathione + H2O = L-cysteinylglycine + L-glutamate. The enzyme catalyses an S-substituted glutathione + H2O = an S-substituted L-cysteinylglycine + L-glutamate. The catalysed reaction is leukotriene C4 + H2O = leukotriene D4 + L-glutamate. It catalyses the reaction S-[(2E,6E,10E)-geranylgeranyl]-L-glutathione + H2O = S-[(2E,6E,10E)-geranylgeranyl]-L-cysteinylglycine + L-glutamate. It carries out the reaction an N-terminal (5-L-glutamyl)-[peptide] + an alpha-amino acid = 5-L-glutamyl amino acid + an N-terminal L-alpha-aminoacyl-[peptide]. It participates in lipid metabolism; leukotriene D4 biosynthesis. Its pathway is sulfur metabolism; glutathione metabolism. With respect to regulation, inhibited by serine-borate. Its function is as follows. Cleaves the gamma-glutamyl bond of extracellular glutathione tripeptide (gamma-Glu-Cys-Gly) and certain glutathione conjugates. Hydrolyzes glutathione releasing L-Glu and Cys-Gly dipeptide which is further metabolized to maintain extracellular cysteine levels but also to provide cysteine necessary for intracellular glutathione synthesis. Among glutathione-S-conjugates metabolizes leukotriene C4 (LTC4) and S-geranylgeranyl-glutathione (GGG), but is inactive toward gamma-glutamyl leucine. Converts extracellular LTC4 to LTD4 during acute inflammatory response. Acts as a negative regulator of GGG bioactivity. GGT5 (via GGG catabolism) and ABCC1 (via extracellular transport) establish GGG gradients within lymphoid tissues to position P2RY8-positive lymphocytes at germinal centers in lymphoid follicles and restrict their chemotactic transmigration from blood vessels to bone marrow parenchyma. The transpeptidation reaction, i.e. the transfer of gamma-glutamyl moiety to an acceptor molecule to yield a new gamma-glutamyl compound requires high concentration of dipeptide acceptor and is considered nonphysiological. The chain is Glutathione hydrolase 5 proenzyme (Ggt5) from Rattus norvegicus (Rat).